Consider the following 529-residue polypeptide: Lysine--tRNA ligase (529 aa).

The 'HIGH' region signature appears at 44-52 (PSGLPHIGT). A 'KMSKS' region motif is present at residues 290 to 294 (KISKS). Lysine 293 contributes to the ATP binding site.

This sequence belongs to the class-I aminoacyl-tRNA synthetase family.

It is found in the cytoplasm. The enzyme catalyses tRNA(Lys) + L-lysine + ATP = L-lysyl-tRNA(Lys) + AMP + diphosphate. This chain is Lysine--tRNA ligase, found in Rickettsia akari (strain Hartford).